The chain runs to 571 residues: Gag-Pro polyprotein (571 aa).

Glycine 2 is lipidated: N-myristoyl glycine; by host. A PPXY motif motif is present at residues 100–103 (PPPY). Repeats lie at residues 342 to 362 (PPGPCYRCLKEGHWARDCPTK) and 367 to 387 (PPGPCPICKDPSHWKRDCPTL). 2 CCHC-type zinc fingers span residues 345–362 (PCYRCLKEGHWARDCPTK) and 370–387 (PCPICKDPSHWKRDCPTL). The active-site Protease; shared with dimeric partner is threonine 453.

Homodimer; the homodimers are part of the immature particles. Interacts with human TSG101 and NEDD4; these interactions are essential for budding and release of viral particles. In terms of assembly, homodimer; further assembles as homohexamers. Specific enzymatic cleavages by the viral protease yield mature proteins. The polyprotein is cleaved during and after budding, this process is termed maturation. The protease is autoproteolytically processed at its N- and C-termini. Post-translationally, myristoylated. Myristoylation of the matrix (MA) domain mediates the transport and binding of Gag polyproteins to the host plasma membrane and is required for the assembly of viral particles.

It is found in the virion. The matrix domain targets Gag, Gag-Pro and Gag-Pro-Pol polyproteins to the plasma membrane via a multipartite membrane binding signal, that includes its myristoylated N-terminus. In terms of biological role, matrix protein. Functionally, forms the spherical core of the virus that encapsulates the genomic RNA-nucleocapsid complex. Its function is as follows. Binds strongly to viral nucleic acids and promote their aggregation. Also destabilizes the nucleic acids duplexes via highly structured zinc-binding motifs. The aspartyl protease mediates proteolytic cleavages of Gag and Gag-Pol polyproteins during or shortly after the release of the virion from the plasma membrane. Cleavages take place as an ordered, step-wise cascade to yield mature proteins. This process is called maturation. Displays maximal activity during the budding process just prior to particle release from the cell. In Bovine leukemia virus (isolate Japanese BLV-1) (BLV), this protein is Gag-Pro polyprotein.